A 278-amino-acid polypeptide reads, in one-letter code: Methyltransferase adrK (278 aa).

S-adenosyl-L-methionine-binding positions include 124–125, 151–152, and 152–153; these read DL, DV, and VL.

It belongs to the class I-like SAM-binding methyltransferase superfamily. Homodimer.

The protein operates within secondary metabolite biosynthesis; terpenoid biosynthesis. Its function is as follows. Methyltransferase; part of the gene cluster that mediates the biosynthesis of andrastins, meroterpenoid compounds that exhibit inhibitory activity against ras farnesyltransferase, suggesting that they could be promising leads for antitumor agents. The first step of the pathway is the synthesis of 3,5-dimethylorsellinic acid (DMOA) by the polyketide synthase adrD via condensation of one acetyl-CoA starter unit with 3 malonyl-CoA units and 2 methylations. DMAO is then converted to farnesyl-DMAO by the prenyltransferase adrG. The methyltransferase adrK catalyzes the methylation of the carboxyl group of farnesyl-DMAO to farnesyl-DMAO methyl ester which is further converted to epoxyfarnesyl-DMAO methyl ester by the FAD-dependent monooxygenase adrH. The terpene cyclase adrI then catalyzes the carbon skeletal rearrangement to generate the andrastin E, the first compound in the pathway having the andrastin scaffold, with the tetracyclic ring system. The post-cyclization tailoring enzymes adrF, adrE, adrJ, and adrA, are involved in the conversion of andrastin E into andrastin A. The short chain dehydrogenase adrF is responsible for the oxidation of the C-3 a hydroxyl group of andrastin E to yield the corresponding ketone, andrastin D. The ketoreductase adrE stereoselectively reduces the carbonyl moiety to reverse the stereochemistry of the C-3 position to yield andrastin F. The acetyltransferase adrJ is the acetyltransferase that attaches the acetyl group to the C-3 hydroxyl group of andrastin F to yield andrastin C. Finally, the cytochrome P450 monooxygenase adrA catalyzes two sequential oxidation reactions of the C-23 methyl group, to generate the corresponding alcohol andrastin B, and aldehyde andrastin A. In Penicillium roqueforti, this protein is Methyltransferase adrK.